Consider the following 70-residue polypeptide: Disintegrin triflavin (70 aa).

The region spanning 1–70 (GEECDCGSPS…SADCPRWNGL (70 aa)) is the Disintegrin domain. Disulfide bonds link cysteine 4–cysteine 19, cysteine 6–cysteine 14, cysteine 13–cysteine 36, cysteine 27–cysteine 33, cysteine 32–cysteine 57, and cysteine 45–cysteine 64. Residues 49 to 51 (RGD) carry the Cell attachment site motif.

This sequence belongs to the venom metalloproteinase (M12B) family. P-II subfamily. P-IIa sub-subfamily. As to quaternary structure, monomer. Expressed by the venom gland.

The protein localises to the secreted. Inhibits fibrinogen interaction with platelets. Acts by binding to alpha-IIb/beta-3 (ITGA2B/ITGB3) on the platelet surface and inhibits aggregation induced by ADP, thrombin, platelet-activating factor and collagen. The sequence is that of Disintegrin triflavin from Protobothrops flavoviridis (Habu).